Consider the following 753-residue polypeptide: Polyadenylate-binding protein, cytoplasmic and nuclear (753 aa).

The segment covering 1 to 43 has biased composition (low complexity); it reads MSAEASTTPAAETPVNGTPETSTTPAAPAAEATAAETAAPSTS. The segment at 1-49 is disordered; it reads MSAEASTTPAAETPVNGTPETSTTPAAPAAEATAAETAAPSTSQPHSAS. RRM domains are found at residues 48–126, 136–213, 229–306, and 332–460; these read ASLY…WSQR, GNVF…HHIS, TNVY…RAQK, and VNLY…LAQR. 3 disordered regions span residues 363–417, 607–649, and 727–753; these read VMRD…SDKK, RGPG…PAAG, and GTEG…ENKS. The segment covering 376–417 has biased composition (basic and acidic residues); the sequence is DSDKEKKEESKEEKPEAAEKTEEAAKESGDDQDKENKKSDKK. The segment covering 607–619 has biased composition (gly residues); sequence RGPGYGQGRGGVP. Residues 633-649 show a composition bias toward low complexity; it reads QNAQPAAGRGEEAPAAG. Residues 647 to 724 enclose the PABC domain; that stretch reads AAGLTAQSLA…ALSVYDEYMK (78 aa). Residues 737 to 753 show a composition bias toward basic and acidic residues; it reads PKPKEAATEESTEENKS.

The protein belongs to the polyadenylate-binding protein type-1 family.

It localises to the cytoplasm. The protein resides in the nucleus. In terms of biological role, binds the poly(A) tail of mRNA. Appears to be an important mediator of the multiple roles of the poly(A) tail in mRNA biogenesis, stability and translation. In the nucleus, involved in both mRNA cleavage and polyadenylation. Is also required for efficient mRNA export to the cytoplasm. Acts in concert with a poly(A)-specific nuclease (PAN) to affect poly(A) tail shortening, which may occur concomitantly with either nucleocytoplasmic mRNA transport or translational initiation. In the cytoplasm, stimulates translation initiation and regulates mRNA decay through translation termination-coupled poly(A) shortening, probably mediated by PAN. The polypeptide is Polyadenylate-binding protein, cytoplasmic and nuclear (pab1) (Aspergillus terreus (strain NIH 2624 / FGSC A1156)).